The following is a 491-amino-acid chain: MNANELTIAEARDALAKGELSAVDLTMACLTAIDAGTPLNAFVHATPEIALDQARAADARRGAEAGALNGIPLGIKDLFCTRGVASQAASNILRGFKPEYESTVTSKLFEAGAVMLGKLNMDEFAMGSSNETSCYGDAVNPWKVDDRRLTPGGSSGGSAAAVAADLCLAATGTDTGGSIRQPAAFTGIVGIKPTYGRVSRWGIVAFASSLDQAGPMTKSVRDAAILLGAMAGHDPKDSTSADIPVPDFEAALTGDIRGRKIGIPREYRMEGMPAEIEALWARGREMLADAGAEIVDISLPHTKYALPAYYVIAPAEASSNLARYDGVRYGHRARLGQGDGIVDMYEKTRAEGFGKEVQRRVMIGTYVLSAGFYDAYYNRARKVRALIKRDFDEAFAAGVDAILTPATPSSAFGLGEMADADPVAMYLNDVFTVTVNLAGLPGISVPVGLDAKGLPLGLQLIGRPWDEAGLLNHAHVLERAAGFVEKPRKWW.

Active-site charge relay system residues include Lys-76 and Ser-154. The active-site Acyl-ester intermediate is Ser-178.

This sequence belongs to the amidase family. GatA subfamily. Heterotrimer of A, B and C subunits.

The catalysed reaction is L-glutamyl-tRNA(Gln) + L-glutamine + ATP + H2O = L-glutaminyl-tRNA(Gln) + L-glutamate + ADP + phosphate + H(+). Allows the formation of correctly charged Gln-tRNA(Gln) through the transamidation of misacylated Glu-tRNA(Gln) in organisms which lack glutaminyl-tRNA synthetase. The reaction takes place in the presence of glutamine and ATP through an activated gamma-phospho-Glu-tRNA(Gln). This chain is Glutamyl-tRNA(Gln) amidotransferase subunit A, found in Cereibacter sphaeroides (strain KD131 / KCTC 12085) (Rhodobacter sphaeroides).